We begin with the raw amino-acid sequence, 124 residues long: Large ribosomal subunit protein bL12 (124 aa).

This sequence belongs to the bacterial ribosomal protein bL12 family. In terms of assembly, homodimer. Part of the ribosomal stalk of the 50S ribosomal subunit. Forms a multimeric L10(L12)X complex, where L10 forms an elongated spine to which 2 to 4 L12 dimers bind in a sequential fashion. Binds GTP-bound translation factors.

In terms of biological role, forms part of the ribosomal stalk which helps the ribosome interact with GTP-bound translation factors. Is thus essential for accurate translation. The protein is Large ribosomal subunit protein bL12 of Janthinobacterium sp. (strain Marseille) (Minibacterium massiliensis).